Here is a 214-residue protein sequence, read N- to C-terminus: Adenylate kinase (214 aa).

Residue 10 to 15 (GAGKGT) coordinates ATP. The interval 30–59 (STGDMLRAAIKAGTELGKQAKAVIDAGQLV) is NMP. Residues Thr-31, Arg-36, 57–59 (QLV), 85–88 (GFPR), and Gln-92 contribute to the AMP site. Positions 122–159 (GRRAHLPSGRTYHVVYNPPKVEGKDDVTGEDLVVRDDD) are LID. ATP-binding positions include Arg-123 and 132-133 (TY). AMP is bound by residues Arg-156 and Arg-167. Lys-200 contacts ATP.

This sequence belongs to the adenylate kinase family. Monomer.

The protein resides in the cytoplasm. The enzyme catalyses AMP + ATP = 2 ADP. Its pathway is purine metabolism; AMP biosynthesis via salvage pathway; AMP from ADP: step 1/1. Functionally, catalyzes the reversible transfer of the terminal phosphate group between ATP and AMP. Plays an important role in cellular energy homeostasis and in adenine nucleotide metabolism. In Vibrio vulnificus (strain CMCP6), this protein is Adenylate kinase.